Consider the following 98-residue polypeptide: Small ribosomal subunit protein eS24 (98 aa).

Positions 76–98 (GRQRTERSYLLNRGEPKKEEEEA) are disordered. Over residues 89-98 (GEPKKEEEEA) the composition is skewed to basic and acidic residues.

The protein belongs to the eukaryotic ribosomal protein eS24 family.

This chain is Small ribosomal subunit protein eS24, found in Methanosphaerula palustris (strain ATCC BAA-1556 / DSM 19958 / E1-9c).